Consider the following 104-residue polypeptide: Protein RnfH (104 aa).

This sequence belongs to the UPF0125 (RnfH) family.

In Pseudomonas syringae pv. syringae (strain B728a), this protein is Protein RnfH.